Here is a 316-residue protein sequence, read N- to C-terminus: tRNA dimethylallyltransferase (316 aa).

ATP is bound at residue 17–24 (GPTASGKT). 19 to 24 (TASGKT) contributes to the substrate binding site. 4 interaction with substrate tRNA regions span residues 42 to 45 (DSAL), 166 to 170 (QRLSR), 247 to 252 (RCVGYR), and 280 to 287 (KRQITWLR).

It belongs to the IPP transferase family. Monomer. Requires Mg(2+) as cofactor.

It catalyses the reaction adenosine(37) in tRNA + dimethylallyl diphosphate = N(6)-dimethylallyladenosine(37) in tRNA + diphosphate. In terms of biological role, catalyzes the transfer of a dimethylallyl group onto the adenine at position 37 in tRNAs that read codons beginning with uridine, leading to the formation of N6-(dimethylallyl)adenosine (i(6)A). The sequence is that of tRNA dimethylallyltransferase from Escherichia fergusonii (strain ATCC 35469 / DSM 13698 / CCUG 18766 / IAM 14443 / JCM 21226 / LMG 7866 / NBRC 102419 / NCTC 12128 / CDC 0568-73).